Here is a 490-residue protein sequence, read N- to C-terminus: Nuclear distribution protein PAC1 (490 aa).

Residues 65 to 96 (STVLRLQKKIIDLENEIHNLTNIINTTNSETN) adopt a coiled-coil conformation. 8 WD repeats span residues 118–157 (QCEN…NTIP), 163–204 (AHTR…RTLN), 205–245 (GHEH…CLKS), 251–290 (EWCR…GVAM), 293–327 (GHTH…FPSI), 328–367 (PSEL…LIPH), 388–427 (GHSS…ETGS), and 436–487 (GHEG…NSIK).

The protein belongs to the WD repeat LIS1/nudF family. Self-associates. Interacts with NDL1 and dynein.

It is found in the cytoplasm. Its subcellular location is the cytoskeleton. The protein resides in the spindle pole. Positively regulates the activity of the minus-end directed microtubule motor protein dynein. Plays a central role in positioning the mitotic spindle at the bud neck during cell division. Targets cytoplasmic dynein to microtubule plus ends, thereby promoting dynein-mediated microtubule sliding along the bud cortex and consequently the movement of the mitotic spindle to the bud neck. This is Nuclear distribution protein PAC1 from Candida tropicalis (strain ATCC MYA-3404 / T1) (Yeast).